Consider the following 2548-residue polypeptide: Unconventional myosin-IXa (2548 aa).

The Ras-associating domain maps to 14-112 (NEHTLRIYPG…YRFLLREKNL (99 aa)). The Myosin motor domain maps to 146 to 1016 (KDFDDLCSLP…ERQHLQDLLH (871 aa)). The chain crosses the membrane as a helical span at residues 175–195 (IYTYVGSILIVINPFKFLPIY). 239–246 (GESGSGKT) provides a ligand contact to ATP. Ser-755 carries the phosphoserine modification. An actin-binding region spans residues 898-920 (LSKLMETLGQAEPYFVKCIRSNA). IQ domains are found at residues 1021–1041 (RRIILLQRWFRVLLCRQHFLH), 1042–1071 (LRQASVIIQRFWRNYLNQKQVRDAAVQKDA), 1074–1103 (MASAAALLQASWRAHLERQRYLELRAAAIV), 1115–1144 (RHMAAICIQARWKAYRESKRYQEQRKKIIL), and 1138–1167 (QRKKIILLQSTCRGFRARQRFKALKEQRLR). Positions 1021 to 1162 (RRIILLQRWF…RARQRFKALK (142 aa)) are neck or regulatory domain. The tail stretch occupies residues 1163-2511 (EQRLRETKPE…LKNVKNSPQK (1349 aa)). A compositionally biased stretch (basic and acidic residues) spans 1223 to 1236 (SVDCLKESPNKQQE). The interval 1223-1250 (SVDCLKESPNKQQERAQSQSGVDLQEDV) is disordered. Ser-1242 and Ser-1258 each carry phosphoserine. Positions 1264–1291 (QKKVGRAKRESRRMRELEQAIFSLELLK) form a coiled coil. Residues Ser-1299 and Ser-1317 each carry the phosphoserine modification. The tract at residues 1299–1386 (SPSEDRRWST…SNETSSAEHL (88 aa)) is disordered. Low complexity-rich tracts occupy residues 1324-1337 (SESSQGSLELLSYE) and 1356-1366 (FPSPKISSSPK). At Ser-1364 the chain carries Phosphoserine. Residues 1372-1381 (NALSASNETS) are compositionally biased toward polar residues. The stretch at 1486–1532 (VLKKLEKLNTEKEERQKQLQQQNEKEMMEQIRQQTDILEKERKAFKT) forms a coiled coil. Positions 1804–1836 (YHPTPPLSPELPGSCRKEFKENKEPSPKAKRKR) are disordered. The span at 1818 to 1830 (CRKEFKENKEPSP) shows a compositional bias: basic and acidic residues. Ser-1948 bears the Phosphoserine mark. Phorbol-ester/DAG-type zinc fingers lie at residues 1999–2048 (GHIF…TAKC) and 2068–2119 (LTSE…DAES). Residues 2063–2251 (VELSRLTSED…LIVVEQMNKY (189 aa)) form the Rho-GAP domain. A Phosphoserine modification is found at Ser-2294. Residues 2315-2358 (AAMETDITEQQQAAMQQEERVLTEQIENLQKEKEELTFEMLVLE) are a coiled coil. 2 disordered regions span residues 2359-2383 (PRASDDETLESEASIGTADSSENLN) and 2401-2424 (SSLKTAGKSEPSSKLRKQLKKQQD). At Ser-2464 the chain carries Phosphoserine. Residues 2490–2531 (RGTFNPEKGKQKLKNVKNSPQKTKETPEGTVMSGRRKTVDPD) form a disordered region.

It belongs to the TRAFAC class myosin-kinesin ATPase superfamily. Myosin family. Post-translationally, phosphorylated by ALPK1 following monosodium urate monohydrate (MSU)-induced inflammation. Found to be expressed in testis and placenta and at lower levels in all the examined tissues with the exception of liver. Isoform 5: Found in leukocytes but not in brain, retina or testis.

The protein localises to the membrane. It localises to the cytoplasm. It is found in the synapse. Its subcellular location is the cell projection. The protein resides in the growth cone. In terms of biological role, myosins are actin-based motor molecules with ATPase activity. Unconventional myosins serve in intracellular movements. Regulates Rho by stimulating it's GTPase activity in neurons. Required for the regulation of neurite branching and motor neuron axon guidance. This is Unconventional myosin-IXa (MYO9A) from Homo sapiens (Human).